The following is a 64-amino-acid chain: Large ribosomal subunit protein bL35 (64 aa).

The interval 1 to 23 (MPKMKTHRGAAKRFKKTKNKIKR) is disordered.

The protein belongs to the bacterial ribosomal protein bL35 family.

In Nitratiruptor sp. (strain SB155-2), this protein is Large ribosomal subunit protein bL35.